A 120-amino-acid chain; its full sequence is Large ribosomal subunit protein uL18 (120 aa).

It belongs to the universal ribosomal protein uL18 family. Part of the 50S ribosomal subunit; part of the 5S rRNA/L5/L18/L25 subcomplex. Contacts the 5S and 23S rRNAs.

In terms of biological role, this is one of the proteins that bind and probably mediate the attachment of the 5S RNA into the large ribosomal subunit, where it forms part of the central protuberance. The protein is Large ribosomal subunit protein uL18 of Rhodospirillum rubrum (strain ATCC 11170 / ATH 1.1.1 / DSM 467 / LMG 4362 / NCIMB 8255 / S1).